Here is a 178-residue protein sequence, read N- to C-terminus: ATP-dependent protease subunit HslV (178 aa).

The active site involves Thr7. Positions 162, 165, and 168 each coordinate Na(+).

The protein belongs to the peptidase T1B family. HslV subfamily. As to quaternary structure, a double ring-shaped homohexamer of HslV is capped on each side by a ring-shaped HslU homohexamer. The assembly of the HslU/HslV complex is dependent on binding of ATP.

The protein resides in the cytoplasm. The enzyme catalyses ATP-dependent cleavage of peptide bonds with broad specificity.. With respect to regulation, allosterically activated by HslU binding. Protease subunit of a proteasome-like degradation complex believed to be a general protein degrading machinery. This Burkholderia lata (strain ATCC 17760 / DSM 23089 / LMG 22485 / NCIMB 9086 / R18194 / 383) protein is ATP-dependent protease subunit HslV.